A 202-amino-acid polypeptide reads, in one-letter code: Ribonuclease HII (202 aa).

Residues 15–202 (QGVAGVDEAG…APIKAFGISA (188 aa)) enclose the RNase H type-2 domain. A divalent metal cation-binding residues include Asp-21, Glu-22, and Asp-113.

It belongs to the RNase HII family. Mn(2+) serves as cofactor. Requires Mg(2+) as cofactor.

The protein resides in the cytoplasm. The enzyme catalyses Endonucleolytic cleavage to 5'-phosphomonoester.. Functionally, endonuclease that specifically degrades the RNA of RNA-DNA hybrids. The chain is Ribonuclease HII from Bordetella avium (strain 197N).